The primary structure comprises 156 residues: Ribosomal RNA large subunit methyltransferase H (156 aa).

Residues leucine 73, glycine 104, and 123 to 128 (LSPLTL) contribute to the S-adenosyl-L-methionine site.

Belongs to the RNA methyltransferase RlmH family. As to quaternary structure, homodimer.

The protein localises to the cytoplasm. The catalysed reaction is pseudouridine(1915) in 23S rRNA + S-adenosyl-L-methionine = N(3)-methylpseudouridine(1915) in 23S rRNA + S-adenosyl-L-homocysteine + H(+). Specifically methylates the pseudouridine at position 1915 (m3Psi1915) in 23S rRNA. The sequence is that of Ribosomal RNA large subunit methyltransferase H from Aliivibrio fischeri (strain ATCC 700601 / ES114) (Vibrio fischeri).